Consider the following 962-residue polypeptide: Protocadherin gamma-A4 (962 aa).

The disordered stretch occupies residues 1–24; the sequence is MHFILDPEDPGAPQASTEGKPKHR. Residues 1–59 form the signal peptide; that stretch reads MHFILDPEDPGAPQASTEGKPKHRRLRGGVVMAAPPARPDHTRLLQICLLLGVLVEIRA. 6 Cadherin domains span residues 60 to 164, 165 to 273, 274 to 378, 379 to 483, 484 to 598, and 601 to 713; these read EQIL…PPSF, GTEQ…APVF, TQPE…APEV, TVTS…PPTF, PHAS…YPTF, and DGST…KPSA. Residues 60–723 are Extracellular-facing; sequence EQILYSVFEE…DPDDSGLTLY (664 aa). Residues N450 and N576 are each glycosylated (N-linked (GlcNAc...) asparagine). Residues 724 to 744 traverse the membrane as a helical segment; that stretch reads LVVAVAAVSCVFLAFVTVLLA. Residues 745-962 lie on the Cytoplasmic side of the membrane; that stretch reads LKLRRWHKSR…KKKSGKKEKK (218 aa). Disordered regions lie at residues 832-871 and 932-962; these read KGDP…WPNN and ATLT…KEKK. Positions 836–871 are enriched in polar residues; sequence NLQQAPPNTDWRFSQAQRPGTSGSQNGDDTGTWPNN. Over residues 952–962 the composition is skewed to basic residues; it reads NKKKSGKKEKK.

It localises to the cell membrane. In terms of biological role, potential calcium-dependent cell-adhesion protein. May be involved in the establishment and maintenance of specific neuronal connections in the brain. This Homo sapiens (Human) protein is Protocadherin gamma-A4 (PCDHGA4).